The primary structure comprises 374 residues: Carbamoyl phosphate synthase small chain (374 aa).

The segment at 1 to 185 is CPSase; it reads MKAILALEDG…DVSSGYKWSD (185 aa). L-glutamine contacts are provided by serine 45, glycine 237, and glycine 239. Residues 189–374 enclose the Glutamine amidotransferase type-1 domain; the sequence is RLVLVDYGVK…RNLVKDATGK (186 aa). Cysteine 264 acts as the Nucleophile in catalysis. L-glutamine-binding residues include leucine 265, glutamine 268, asparagine 306, glycine 308, and phenylalanine 309. Residues histidine 347 and glutamate 349 contribute to the active site.

Belongs to the CarA family. Composed of two chains; the small (or glutamine) chain promotes the hydrolysis of glutamine to ammonia, which is used by the large (or ammonia) chain to synthesize carbamoyl phosphate. Tetramer of heterodimers (alpha,beta)4.

The catalysed reaction is hydrogencarbonate + L-glutamine + 2 ATP + H2O = carbamoyl phosphate + L-glutamate + 2 ADP + phosphate + 2 H(+). It carries out the reaction L-glutamine + H2O = L-glutamate + NH4(+). It participates in amino-acid biosynthesis; L-arginine biosynthesis; carbamoyl phosphate from bicarbonate: step 1/1. The protein operates within pyrimidine metabolism; UMP biosynthesis via de novo pathway; (S)-dihydroorotate from bicarbonate: step 1/3. Small subunit of the glutamine-dependent carbamoyl phosphate synthetase (CPSase). CPSase catalyzes the formation of carbamoyl phosphate from the ammonia moiety of glutamine, carbonate, and phosphate donated by ATP, constituting the first step of 2 biosynthetic pathways, one leading to arginine and/or urea and the other to pyrimidine nucleotides. The small subunit (glutamine amidotransferase) binds and cleaves glutamine to supply the large subunit with the substrate ammonia. The polypeptide is Carbamoyl phosphate synthase small chain (Maridesulfovibrio salexigens (strain ATCC 14822 / DSM 2638 / NCIMB 8403 / VKM B-1763) (Desulfovibrio salexigens)).